The primary structure comprises 116 residues: Ferredoxin-like protein in nif region (116 aa).

A 4Fe-4S ferredoxin-type domain is found at 2 to 29 (AYTITSQCISCKLCSSVCPTGAIKIAEN). Cys9, Cys12, Cys15, and Cys19 together coordinate iron-sulfur cluster.

The chain is Ferredoxin-like protein in nif region (fdxN) from Nostoc sp. (strain PCC 7120 / SAG 25.82 / UTEX 2576).